A 542-amino-acid polypeptide reads, in one-letter code: Glucans biosynthesis protein D (542 aa).

The segment at residues 1–31 (MHRRNLLKASMAIAAYTGLSATGLLASRAWA) is a signal peptide (tat-type signal).

The protein belongs to the OpgD/OpgG family. Predicted to be exported by the Tat system. The position of the signal peptide cleavage has not been experimentally proven.

It is found in the periplasm. It participates in glycan metabolism; osmoregulated periplasmic glucan (OPG) biosynthesis. In terms of biological role, probably involved in the control of the structural glucose backbone of osmoregulated periplasmic glucans (OPGs). This Pseudomonas fluorescens (strain Pf0-1) protein is Glucans biosynthesis protein D.